Reading from the N-terminus, the 296-residue chain is tRNA dimethylallyltransferase (296 aa).

Position 2 to 9 (2 to 9 (GPTASGKT)) interacts with ATP. 4–9 (TASGKT) provides a ligand contact to substrate. Interaction with substrate tRNA regions lie at residues 27-30 (DSAL), 151-155 (QRLSR), and 232-237 (RCVGYR).

It belongs to the IPP transferase family. In terms of assembly, monomer. The cofactor is Mg(2+).

It carries out the reaction adenosine(37) in tRNA + dimethylallyl diphosphate = N(6)-dimethylallyladenosine(37) in tRNA + diphosphate. Its function is as follows. Catalyzes the transfer of a dimethylallyl group onto the adenine at position 37 in tRNAs that read codons beginning with uridine, leading to the formation of N6-(dimethylallyl)adenosine (i(6)A). This chain is tRNA dimethylallyltransferase, found in Shewanella frigidimarina (strain NCIMB 400).